The primary structure comprises 883 residues: DNA double-strand break repair Rad50 ATPase (883 aa).

Residues K12, 32–38, and Q137 contribute to the ATP site; that span reads NGSGKSS. Residues 244 to 283 adopt a coiled-coil conformation; the sequence is ERYEESRTALADVEETIADVREAVAEAERERETLADRVSD. Disordered stretches follow at residues 271 to 290 and 305 to 326; these read ERER…RASD and DDPD…REAV. Basic and acidic residues predominate over residues 313 to 326; sequence SAERDAVADQREAV. 2 coiled-coil regions span residues 336–389 and 414–452; these read AVSR…IEAL and LDDA…LDEG. The region spanning 407–506 is the Zinc-hook domain; it reads FGAAEAFLDD…RVDRGESLVA (100 aa). The Zn(2+) site is built by C454 and C457. A disordered region spans residues 508–565; sequence EDRVDDLEQQRERAVERRDEQADIADAKRDQAAEKRDRAADLDAEAEDARADAAAKRD. Coiled coils occupy residues 571 to 604 and 668 to 720; these read RETL…AADA and KLQA…VTAL.

This sequence belongs to the SMC family. RAD50 subfamily. Homodimer. Forms a heterotetramer composed of two Mre11 subunits and two Rad50 subunits. Requires Zn(2+) as cofactor.

Its function is as follows. Part of the Rad50/Mre11 complex, which is involved in the early steps of DNA double-strand break (DSB) repair. Rad50 controls the balance between DNA end bridging and DNA resection via ATP-dependent structural rearrangements of the Rad50/Mre11 complex. This is DNA double-strand break repair Rad50 ATPase from Halobacterium salinarum (strain ATCC 700922 / JCM 11081 / NRC-1) (Halobacterium halobium).